The primary structure comprises 40 residues: Photosystem II reaction center protein J (40 aa).

A helical membrane pass occupies residues 8–28 (IPLWLVGTVTGTLVIGLMGIF).

The protein belongs to the PsbJ family. In terms of assembly, PSII is composed of 1 copy each of membrane proteins PsbA, PsbB, PsbC, PsbD, PsbE, PsbF, PsbH, PsbI, PsbJ, PsbK, PsbL, PsbM, PsbT, PsbX, PsbY, PsbZ, Psb30/Ycf12, at least 3 peripheral proteins of the oxygen-evolving complex and a large number of cofactors. It forms dimeric complexes.

The protein localises to the plastid. The protein resides in the chloroplast thylakoid membrane. Its function is as follows. One of the components of the core complex of photosystem II (PSII). PSII is a light-driven water:plastoquinone oxidoreductase that uses light energy to abstract electrons from H(2)O, generating O(2) and a proton gradient subsequently used for ATP formation. It consists of a core antenna complex that captures photons, and an electron transfer chain that converts photonic excitation into a charge separation. The polypeptide is Photosystem II reaction center protein J (Psilotum nudum (Whisk fern)).